The sequence spans 247 residues: E3 SUMO-protein ligase NSE2 (247 aa).

Met-1 carries the post-translational modification N-acetylmethionine. Residues Lys-90 and Lys-107 each participate in a glycyl lysine isopeptide (Lys-Gly) (interchain with G-Cter in SUMO2) cross-link. At Ser-116 the chain carries Phosphoserine. Glycyl lysine isopeptide (Lys-Gly) (interchain with G-Cter in SUMO2) cross-links involve residues Lys-125 and Lys-130. Residues 154 to 240 (MDEDMIVTQS…LRRAIESHNK (87 aa)) form an SP-RING-type zinc finger. Zn(2+) is bound by residues Cys-185, His-187, Cys-210, and Cys-215.

Belongs to the NSE2 family. In terms of assembly, component of the SMC5-SMC6 complex which consists at least of SMC5, SMC6, NSMCE2, NSMCE1, NSMCE4A or EID3 and NSMCE3. Sumoylated, possibly via autosumoylation.

It localises to the nucleus. The protein resides in the chromosome. It is found in the telomere. The protein localises to the PML body. The protein operates within protein modification; protein sumoylation. In terms of biological role, E3 SUMO-protein ligase component of the SMC5-SMC6 complex, a complex involved in DNA double-strand break repair by homologous recombination. Is not be required for the stability of the complex. The complex may promote sister chromatid homologous recombination by recruiting the SMC1-SMC3 cohesin complex to double-strand breaks. Acts as an E3 ligase mediating SUMO attachment to various proteins such as SMC6L1 and TSNAX, the shelterin complex subunits TERF1, TERF2, TINF2 and TERF2IP, RAD51AP1, and maybe the cohesin components RAD21 and STAG2. Required for recruitment of telomeres to PML nuclear bodies. Required for sister chromatid cohesion during prometaphase and mitotic progression. This is E3 SUMO-protein ligase NSE2 (Nsmce2) from Rattus norvegicus (Rat).